Reading from the N-terminus, the 344-residue chain is UDP-3-O-acylglucosamine N-acyltransferase (344 aa).

The active-site Proton acceptor is the His-244.

The protein belongs to the transferase hexapeptide repeat family. LpxD subfamily. As to quaternary structure, homotrimer.

The catalysed reaction is a UDP-3-O-[(3R)-3-hydroxyacyl]-alpha-D-glucosamine + a (3R)-hydroxyacyl-[ACP] = a UDP-2-N,3-O-bis[(3R)-3-hydroxyacyl]-alpha-D-glucosamine + holo-[ACP] + H(+). The protein operates within bacterial outer membrane biogenesis; LPS lipid A biosynthesis. Its function is as follows. Catalyzes the N-acylation of UDP-3-O-acylglucosamine using 3-hydroxyacyl-ACP as the acyl donor. Is involved in the biosynthesis of lipid A, a phosphorylated glycolipid that anchors the lipopolysaccharide to the outer membrane of the cell. In Pseudoalteromonas atlantica (strain T6c / ATCC BAA-1087), this protein is UDP-3-O-acylglucosamine N-acyltransferase.